The following is a 447-amino-acid chain: Phosphoglucosamine mutase (447 aa).

The active-site Phosphoserine intermediate is the S102. Residues S102, D241, D243, and D245 each contribute to the Mg(2+) site. S102 carries the post-translational modification Phosphoserine.

This sequence belongs to the phosphohexose mutase family. It depends on Mg(2+) as a cofactor. Activated by phosphorylation.

The catalysed reaction is alpha-D-glucosamine 1-phosphate = D-glucosamine 6-phosphate. Functionally, catalyzes the conversion of glucosamine-6-phosphate to glucosamine-1-phosphate. The sequence is that of Phosphoglucosamine mutase from Hamiltonella defensa subsp. Acyrthosiphon pisum (strain 5AT).